The chain runs to 258 residues: Imidazole glycerol phosphate synthase subunit HisF (258 aa).

Catalysis depends on residues aspartate 11 and aspartate 130.

The protein belongs to the HisA/HisF family. As to quaternary structure, heterodimer of HisH and HisF.

It localises to the cytoplasm. The catalysed reaction is 5-[(5-phospho-1-deoxy-D-ribulos-1-ylimino)methylamino]-1-(5-phospho-beta-D-ribosyl)imidazole-4-carboxamide + L-glutamine = D-erythro-1-(imidazol-4-yl)glycerol 3-phosphate + 5-amino-1-(5-phospho-beta-D-ribosyl)imidazole-4-carboxamide + L-glutamate + H(+). It functions in the pathway amino-acid biosynthesis; L-histidine biosynthesis; L-histidine from 5-phospho-alpha-D-ribose 1-diphosphate: step 5/9. Functionally, IGPS catalyzes the conversion of PRFAR and glutamine to IGP, AICAR and glutamate. The HisF subunit catalyzes the cyclization activity that produces IGP and AICAR from PRFAR using the ammonia provided by the HisH subunit. The polypeptide is Imidazole glycerol phosphate synthase subunit HisF (Sodalis glossinidius (strain morsitans)).